The following is a 432-amino-acid chain: Adenylosuccinate synthetase (432 aa).

Residues 13–19 (GDEGKGK) and 41–43 (GHT) each bind GTP. Asp14 (proton acceptor) is an active-site residue. Residues Asp14 and Gly41 each contribute to the Mg(2+) site. IMP-binding positions include 14-17 (DEGK), 39-42 (NAGH), Thr130, Arg144, Gln225, Thr240, and Arg304. Catalysis depends on His42, which acts as the Proton donor. Residue 300–306 (ATTGRSR) coordinates substrate. Residues Arg306, 332-334 (KLD), and 415-417 (STG) each bind GTP.

Belongs to the adenylosuccinate synthetase family. Homodimer. It depends on Mg(2+) as a cofactor.

It localises to the cytoplasm. The catalysed reaction is IMP + L-aspartate + GTP = N(6)-(1,2-dicarboxyethyl)-AMP + GDP + phosphate + 2 H(+). It functions in the pathway purine metabolism; AMP biosynthesis via de novo pathway; AMP from IMP: step 1/2. Its function is as follows. Plays an important role in the de novo pathway of purine nucleotide biosynthesis. Catalyzes the first committed step in the biosynthesis of AMP from IMP. This chain is Adenylosuccinate synthetase, found in Proteus mirabilis (strain HI4320).